Consider the following 101-residue polypeptide: MAAISREEVAHLARLSRLAVTEEELGTLAGQLDVILQAVAQVGEVTAADIPPTSHSVPLTNVLRDDVVAPCLSPQEALSGAPDAEEQRFRVPRILDEDVAS.

Residues 75–101 are disordered; that stretch reads QEALSGAPDAEEQRFRVPRILDEDVAS. A compositionally biased stretch (basic and acidic residues) spans 85–101; the sequence is EEQRFRVPRILDEDVAS.

The protein belongs to the GatC family. As to quaternary structure, heterotrimer of A, B and C subunits.

It catalyses the reaction L-glutamyl-tRNA(Gln) + L-glutamine + ATP + H2O = L-glutaminyl-tRNA(Gln) + L-glutamate + ADP + phosphate + H(+). The enzyme catalyses L-aspartyl-tRNA(Asn) + L-glutamine + ATP + H2O = L-asparaginyl-tRNA(Asn) + L-glutamate + ADP + phosphate + 2 H(+). Functionally, allows the formation of correctly charged Asn-tRNA(Asn) or Gln-tRNA(Gln) through the transamidation of misacylated Asp-tRNA(Asn) or Glu-tRNA(Gln) in organisms which lack either or both of asparaginyl-tRNA or glutaminyl-tRNA synthetases. The reaction takes place in the presence of glutamine and ATP through an activated phospho-Asp-tRNA(Asn) or phospho-Glu-tRNA(Gln). The polypeptide is Aspartyl/glutamyl-tRNA(Asn/Gln) amidotransferase subunit C (Salinispora arenicola (strain CNS-205)).